The following is a 189-amino-acid chain: Ribosome maturation factor RimM (189 aa).

A PRC barrel domain is found at 95–177 (EDDEFYYADL…AGLVDDPEEL (83 aa)).

This sequence belongs to the RimM family. In terms of assembly, binds ribosomal protein uS19.

The protein resides in the cytoplasm. Its function is as follows. An accessory protein needed during the final step in the assembly of 30S ribosomal subunit, possibly for assembly of the head region. Essential for efficient processing of 16S rRNA. May be needed both before and after RbfA during the maturation of 16S rRNA. It has affinity for free ribosomal 30S subunits but not for 70S ribosomes. The sequence is that of Ribosome maturation factor RimM from Rhizobium leguminosarum bv. trifolii (strain WSM2304).